Here is a 409-residue protein sequence, read N- to C-terminus: Serine/threonine transporter SstT (409 aa).

The next 9 helical transmembrane spans lie at 24-44, 48-68, 82-102, 142-162, 194-214, 218-238, 292-312, 319-339, and 365-385; these read LALGIVIGSVSPQLGLAAGLF, FVGALKAVAPVLVFILVAATI, IIVLYLIGTFSAALTAVIAGM, AIANANYIGILAWALVLGAAL, LGIFGLVSSTIAETGFGALAG, LLAVLLGCMAFIALVVNPAIV, IPLGATVNMGGAAITITVLAM, GIQVDFATALLLSLVATVSAC, and VAMQVVAVGFIIGVIQDSAET.

The protein belongs to the dicarboxylate/amino acid:cation symporter (DAACS) (TC 2.A.23) family.

The protein resides in the cell inner membrane. It catalyses the reaction L-serine(in) + Na(+)(in) = L-serine(out) + Na(+)(out). The catalysed reaction is L-threonine(in) + Na(+)(in) = L-threonine(out) + Na(+)(out). Functionally, involved in the import of serine and threonine into the cell, with the concomitant import of sodium (symport system). The chain is Serine/threonine transporter SstT from Neisseria meningitidis serogroup C / serotype 2a (strain ATCC 700532 / DSM 15464 / FAM18).